Consider the following 162-residue polypeptide: Caveolin-2 (162 aa).

Residues 1–86 are Cytoplasmic-facing; the sequence is MGLEKEKLEC…FELVKFIFYR (86 aa). The segment at residues 87 to 107 is an intramembrane region (helical); it reads LLTTLLAVPAAFILGVVFGVL. Over 108–162 the chain is Cytoplasmic; that stretch reads SCIHIWLVMPVTRSFLMLLPSIQVVWKSVTDMFITPLFHSMGRSLSSIQVRTSDT.

It belongs to the caveolin family. Homooligomer.

Its subcellular location is the golgi apparatus membrane. The protein localises to the cell membrane. It is found in the membrane. It localises to the caveola. In terms of biological role, may act as a scaffolding protein within caveolar membranes. Interacts directly with G-protein alpha subunits and can functionally regulate their activity. This Takifugu rubripes (Japanese pufferfish) protein is Caveolin-2 (cav2).